Here is a 264-residue protein sequence, read N- to C-terminus: Thymidylate synthase (264 aa).

A dUMP-binding site is contributed by R21. H51 is a binding site for (6R)-5,10-methylene-5,6,7,8-tetrahydrofolate. 126–127 (RR) provides a ligand contact to dUMP. C146 (nucleophile) is an active-site residue. Residues 166-169 (RSAD), N177, and 207-209 (HIY) contribute to the dUMP site. D169 lines the (6R)-5,10-methylene-5,6,7,8-tetrahydrofolate pocket. A263 provides a ligand contact to (6R)-5,10-methylene-5,6,7,8-tetrahydrofolate.

Belongs to the thymidylate synthase family. Bacterial-type ThyA subfamily. In terms of assembly, homodimer.

The protein localises to the cytoplasm. The enzyme catalyses dUMP + (6R)-5,10-methylene-5,6,7,8-tetrahydrofolate = 7,8-dihydrofolate + dTMP. It functions in the pathway pyrimidine metabolism; dTTP biosynthesis. Its function is as follows. Catalyzes the reductive methylation of 2'-deoxyuridine-5'-monophosphate (dUMP) to 2'-deoxythymidine-5'-monophosphate (dTMP) while utilizing 5,10-methylenetetrahydrofolate (mTHF) as the methyl donor and reductant in the reaction, yielding dihydrofolate (DHF) as a by-product. This enzymatic reaction provides an intracellular de novo source of dTMP, an essential precursor for DNA biosynthesis. The sequence is that of Thymidylate synthase from Coxiella burnetii (strain Dugway 5J108-111).